A 389-amino-acid chain; its full sequence is Probable protein phosphatase 2C 47 (389 aa).

The PPM-type phosphatase domain occupies 76–346 (RSGSFADIGP…DNLTVIVVCF (271 aa)). Positions 120, 121, 294, and 337 each coordinate Mn(2+).

This sequence belongs to the PP2C family. Mg(2+) serves as cofactor. Requires Mn(2+) as cofactor.

The catalysed reaction is O-phospho-L-seryl-[protein] + H2O = L-seryl-[protein] + phosphate. It carries out the reaction O-phospho-L-threonyl-[protein] + H2O = L-threonyl-[protein] + phosphate. This is Probable protein phosphatase 2C 47 from Oryza sativa subsp. japonica (Rice).